The following is a 356-amino-acid chain: GDSL esterase/lipase At5g37690 (356 aa).

The signal sequence occupies residues 1-18 (MMILRLALAIVISTYATA). Ser-34 functions as the Nucleophile in the catalytic mechanism. 2 N-linked (GlcNAc...) asparagine glycosylation sites follow: Asn-116 and Asn-291. Catalysis depends on residues Asp-322 and His-325.

Belongs to the 'GDSL' lipolytic enzyme family.

The protein localises to the secreted. This is GDSL esterase/lipase At5g37690 from Arabidopsis thaliana (Mouse-ear cress).